The sequence spans 334 residues: Nucleoid-associated protein YejK (334 aa).

This sequence belongs to the YejK family.

The protein localises to the cytoplasm. It is found in the nucleoid. This Escherichia fergusonii (strain ATCC 35469 / DSM 13698 / CCUG 18766 / IAM 14443 / JCM 21226 / LMG 7866 / NBRC 102419 / NCTC 12128 / CDC 0568-73) protein is Nucleoid-associated protein YejK.